The following is a 120-amino-acid chain: uncharacterized protein (120 aa).

Residues 13–119 (VIDKDICKGM…YGLWMAANEE (107 aa)) enclose the PRD domain.

This is an uncharacterized protein from Escherichia coli (strain K12).